The following is a 374-amino-acid chain: Anhydro-N-acetylmuramic acid kinase (374 aa).

12 to 19 (GTSLDGID) provides a ligand contact to ATP.

The protein belongs to the anhydro-N-acetylmuramic acid kinase family.

It catalyses the reaction 1,6-anhydro-N-acetyl-beta-muramate + ATP + H2O = N-acetyl-D-muramate 6-phosphate + ADP + H(+). It participates in amino-sugar metabolism; 1,6-anhydro-N-acetylmuramate degradation. It functions in the pathway cell wall biogenesis; peptidoglycan recycling. Catalyzes the specific phosphorylation of 1,6-anhydro-N-acetylmuramic acid (anhMurNAc) with the simultaneous cleavage of the 1,6-anhydro ring, generating MurNAc-6-P. Is required for the utilization of anhMurNAc either imported from the medium or derived from its own cell wall murein, and thus plays a role in cell wall recycling. This Klebsiella pneumoniae subsp. pneumoniae (strain ATCC 700721 / MGH 78578) protein is Anhydro-N-acetylmuramic acid kinase.